We begin with the raw amino-acid sequence, 306 residues long: Protein FdhE homolog (306 aa).

Belongs to the FdhE family.

The protein localises to the cytoplasm. In terms of biological role, necessary for formate dehydrogenase activity. The chain is Protein FdhE homolog from Proteus mirabilis (strain HI4320).